Here is a 135-residue protein sequence, read N- to C-terminus: UPF0355 protein SH2586 (135 aa).

The disordered stretch occupies residues 105-135 (NSSHDEVEENNSAYEEIDITHYANESKGPKS).

The protein belongs to the UPF0355 family.

This Staphylococcus haemolyticus (strain JCSC1435) protein is UPF0355 protein SH2586.